Here is a 588-residue protein sequence, read N- to C-terminus: Lysine--tRNA ligase (588 aa).

The span at 1–10 (MDSSVSTEPL) shows a compositional bias: polar residues. The segment at 1 to 54 (MDSSVSTEPLSKNALKREKKAKEKEQLEQEKKAAAVAKRQMEQHNLPENDDLDP) is disordered. Positions 20–47 (KAKEKEQLEQEKKAAAVAKRQMEQHNLP) are enriched in basic and acidic residues.

The protein belongs to the class-II aminoacyl-tRNA synthetase family.

The protein localises to the cytoplasm. The catalysed reaction is tRNA(Lys) + L-lysine + ATP = L-lysyl-tRNA(Lys) + AMP + diphosphate. The protein is Lysine--tRNA ligase (LYSRS) of Solanum lycopersicum (Tomato).